Consider the following 145-residue polypeptide: UPF0735 ACT domain-containing protein CPR_1404 (145 aa).

Residues 69-144 (IFNMVVTHEK…GVEKVEFVAM (76 aa)) form the ACT domain.

It belongs to the UPF0735 family.

In Clostridium perfringens (strain SM101 / Type A), this protein is UPF0735 ACT domain-containing protein CPR_1404.